The chain runs to 275 residues: Putative hydroxypyruvate isomerase (275 aa).

Catalysis depends on proton donor/acceptor residues glutamate 147 and glutamate 246.

It belongs to the hyi family.

It carries out the reaction 3-hydroxypyruvate = 2-hydroxy-3-oxopropanoate. Catalyzes the reversible isomerization between hydroxypyruvate and 2-hydroxy-3-oxopropanoate (also termed tartronate semialdehyde). This chain is Putative hydroxypyruvate isomerase (hyi), found in Xenopus laevis (African clawed frog).